Reading from the N-terminus, the 360-residue chain is Archaemetzincin-2 (360 aa).

His254 lines the Zn(2+) pocket. The active-site Proton acceptor is the Glu255. Zn(2+) contacts are provided by His258, His264, Cys265, Cys270, Cys289, and Cys292.

It belongs to the peptidase M54 family. The cofactor is Zn(2+).

In terms of biological role, probable zinc metalloprotease. The protein is Archaemetzincin-2 (AMZ2) of Pongo abelii (Sumatran orangutan).